The primary structure comprises 576 residues: Proline--tRNA ligase (576 aa).

This sequence belongs to the class-II aminoacyl-tRNA synthetase family. ProS type 1 subfamily. Homodimer.

It is found in the cytoplasm. The enzyme catalyses tRNA(Pro) + L-proline + ATP = L-prolyl-tRNA(Pro) + AMP + diphosphate. Catalyzes the attachment of proline to tRNA(Pro) in a two-step reaction: proline is first activated by ATP to form Pro-AMP and then transferred to the acceptor end of tRNA(Pro). As ProRS can inadvertently accommodate and process non-cognate amino acids such as alanine and cysteine, to avoid such errors it has two additional distinct editing activities against alanine. One activity is designated as 'pretransfer' editing and involves the tRNA(Pro)-independent hydrolysis of activated Ala-AMP. The other activity is designated 'posttransfer' editing and involves deacylation of mischarged Ala-tRNA(Pro). The misacylated Cys-tRNA(Pro) is not edited by ProRS. The chain is Proline--tRNA ligase from Finegoldia magna (strain ATCC 29328 / DSM 20472 / WAL 2508) (Peptostreptococcus magnus).